A 317-amino-acid chain; its full sequence is Probable deoxyhypusine synthase (317 aa).

K285 serves as the catalytic Nucleophile.

The protein belongs to the deoxyhypusine synthase family. Requires NAD(+) as cofactor.

The catalysed reaction is [eIF5A protein]-L-lysine + spermidine = [eIF5A protein]-deoxyhypusine + propane-1,3-diamine. It participates in protein modification; eIF5A hypusination. In terms of biological role, catalyzes the NAD-dependent oxidative cleavage of spermidine and the subsequent transfer of the butylamine moiety of spermidine to the epsilon-amino group of a specific lysine residue of the eIF-5A precursor protein to form the intermediate deoxyhypusine residue. In Methanosarcina thermophila, this protein is Probable deoxyhypusine synthase (dys).